A 61-amino-acid polypeptide reads, in one-letter code: Cytochrome c oxidase subunit 9, mitochondrial (61 aa).

Residues 1–13 (MAIAPITGTLKRK) lie on the Mitochondrial matrix side of the membrane. The helical transmembrane segment at 14-36 (IITDISIGFACGFALATGYWYIE) threads the bilayer. At 37–56 (HKPLIVKREAYYAKLKAQQE) the chain is on the mitochondrial intermembrane side. Positions 57 to 61 (AEDSA) are cleaved as a propeptide — removed in mature form.

This sequence belongs to the fungal cytochrome c oxidase subunit 7a family. As to quaternary structure, component of the cytochrome c oxidase (complex IV, CIV), a multisubunit enzyme composed of a catalytic core of 3 subunits and several supernumerary subunits. The complex exists as a monomer or a dimer and forms supercomplexes (SCs) in the inner mitochondrial membrane with ubiquinol-cytochrome c oxidoreductase (cytochrome b-c1 complex, complex III, CIII).

The protein localises to the mitochondrion inner membrane. Its pathway is energy metabolism; oxidative phosphorylation. Its function is as follows. Component of the cytochrome c oxidase, the last enzyme in the mitochondrial electron transport chain which drives oxidative phosphorylation. The respiratory chain contains 3 multisubunit complexes succinate dehydrogenase (complex II, CII), ubiquinol-cytochrome c oxidoreductase (cytochrome b-c1 complex, complex III, CIII) and cytochrome c oxidase (complex IV, CIV), that cooperate to transfer electrons derived from NADH and succinate to molecular oxygen, creating an electrochemical gradient over the inner membrane that drives transmembrane transport and the ATP synthase. Cytochrome c oxidase is the component of the respiratory chain that catalyzes the reduction of oxygen to water. Electrons originating from reduced cytochrome c in the intermembrane space (IMS) are transferred via the dinuclear copper A center (CU(A)) of subunit 2 and heme A of subunit 1 to the active site in subunit 1, a binuclear center (BNC) formed by heme A3 and copper B (CU(B)). The BNC reduces molecular oxygen to 2 water molecules using 4 electrons from cytochrome c in the IMS and 4 protons from the mitochondrial matrix. The protein is Cytochrome c oxidase subunit 9, mitochondrial (COX9) of Debaryomyces hansenii (strain ATCC 36239 / CBS 767 / BCRC 21394 / JCM 1990 / NBRC 0083 / IGC 2968) (Yeast).